The following is an 87-amino-acid chain: DNA-directed RNA polymerase subunit omega (87 aa).

This sequence belongs to the RNA polymerase subunit omega family. As to quaternary structure, the RNAP catalytic core consists of 2 alpha, 1 beta, 1 beta' and 1 omega subunit. When a sigma factor is associated with the core the holoenzyme is formed, which can initiate transcription.

It catalyses the reaction RNA(n) + a ribonucleoside 5'-triphosphate = RNA(n+1) + diphosphate. Functionally, promotes RNA polymerase assembly. Latches the N- and C-terminal regions of the beta' subunit thereby facilitating its interaction with the beta and alpha subunits. The chain is DNA-directed RNA polymerase subunit omega from Pseudomonas fluorescens (strain ATCC BAA-477 / NRRL B-23932 / Pf-5).